Here is a 339-residue protein sequence, read N- to C-terminus: Tryptophan--tRNA ligase (339 aa).

Residues 11–13 (QPT) and 19–20 (GN) each bind ATP. A 'HIGH' region motif is present at residues 12 to 20 (PTGAIHIGN). D135 contacts L-tryptophan. Residues 147 to 149 (GED), I191, and 200 to 204 (KMSKS) contribute to the ATP site. The short motif at 200 to 204 (KMSKS) is the 'KMSKS' region element.

Belongs to the class-I aminoacyl-tRNA synthetase family. In terms of assembly, homodimer.

The protein localises to the cytoplasm. It catalyses the reaction tRNA(Trp) + L-tryptophan + ATP = L-tryptophyl-tRNA(Trp) + AMP + diphosphate + H(+). Catalyzes the attachment of tryptophan to tRNA(Trp). The chain is Tryptophan--tRNA ligase from Prochlorococcus marinus (strain SARG / CCMP1375 / SS120).